A 235-amino-acid polypeptide reads, in one-letter code: 2-C-methyl-D-erythritol 4-phosphate cytidylyltransferase (235 aa).

Belongs to the IspD/TarI cytidylyltransferase family. IspD subfamily.

The enzyme catalyses 2-C-methyl-D-erythritol 4-phosphate + CTP + H(+) = 4-CDP-2-C-methyl-D-erythritol + diphosphate. Its pathway is isoprenoid biosynthesis; isopentenyl diphosphate biosynthesis via DXP pathway; isopentenyl diphosphate from 1-deoxy-D-xylulose 5-phosphate: step 2/6. In terms of biological role, catalyzes the formation of 4-diphosphocytidyl-2-C-methyl-D-erythritol from CTP and 2-C-methyl-D-erythritol 4-phosphate (MEP). This Synechococcus sp. (strain JA-3-3Ab) (Cyanobacteria bacterium Yellowstone A-Prime) protein is 2-C-methyl-D-erythritol 4-phosphate cytidylyltransferase.